The primary structure comprises 284 residues: D-tagatose-1,6-bisphosphate aldolase subunit GatY (284 aa).

D82 acts as the Proton donor in catalysis. H83 and H180 together coordinate Zn(2+). G181 serves as a coordination point for dihydroxyacetone phosphate. H208 lines the Zn(2+) pocket. Dihydroxyacetone phosphate-binding positions include G209–S211 and N230–T233.

This sequence belongs to the class II fructose-bisphosphate aldolase family. TagBP aldolase GatY subfamily. Forms a complex with GatZ. The cofactor is Zn(2+).

It catalyses the reaction D-tagatofuranose 1,6-bisphosphate = D-glyceraldehyde 3-phosphate + dihydroxyacetone phosphate. It functions in the pathway carbohydrate metabolism; D-tagatose 6-phosphate degradation; D-glyceraldehyde 3-phosphate and glycerone phosphate from D-tagatose 6-phosphate: step 2/2. Functionally, catalytic subunit of the tagatose-1,6-bisphosphate aldolase GatYZ, which catalyzes the reversible aldol condensation of dihydroxyacetone phosphate (DHAP or glycerone-phosphate) with glyceraldehyde 3-phosphate (G3P) to produce tagatose 1,6-bisphosphate (TBP). Requires GatZ subunit for full activity and stability. Is involved in the catabolism of galactitol. This is D-tagatose-1,6-bisphosphate aldolase subunit GatY from Shigella sonnei (strain Ss046).